Reading from the N-terminus, the 185-residue chain is Orotate phosphoribosyltransferase (185 aa).

5-phospho-alpha-D-ribose 1-diphosphate contacts are provided by residues R102, K103, K106, H108, and 128 to 136; that span reads DDVITTGGS. Orotate is bound by residues T132 and R160.

The protein belongs to the purine/pyrimidine phosphoribosyltransferase family. PyrE subfamily. Homodimer. Requires Mg(2+) as cofactor.

It carries out the reaction orotidine 5'-phosphate + diphosphate = orotate + 5-phospho-alpha-D-ribose 1-diphosphate. It functions in the pathway pyrimidine metabolism; UMP biosynthesis via de novo pathway; UMP from orotate: step 1/2. Functionally, catalyzes the transfer of a ribosyl phosphate group from 5-phosphoribose 1-diphosphate to orotate, leading to the formation of orotidine monophosphate (OMP). This chain is Orotate phosphoribosyltransferase, found in Leptospira biflexa serovar Patoc (strain Patoc 1 / Ames).